A 413-amino-acid chain; its full sequence is 4-hydroxy-3-methylbut-2-en-1-yl diphosphate synthase (flavodoxin) (413 aa).

4 residues coordinate [4Fe-4S] cluster: cysteine 298, cysteine 301, cysteine 344, and glutamate 351.

Belongs to the IspG family. Requires [4Fe-4S] cluster as cofactor.

It carries out the reaction (2E)-4-hydroxy-3-methylbut-2-enyl diphosphate + oxidized [flavodoxin] + H2O + 2 H(+) = 2-C-methyl-D-erythritol 2,4-cyclic diphosphate + reduced [flavodoxin]. It functions in the pathway isoprenoid biosynthesis; isopentenyl diphosphate biosynthesis via DXP pathway; isopentenyl diphosphate from 1-deoxy-D-xylulose 5-phosphate: step 5/6. In terms of biological role, converts 2C-methyl-D-erythritol 2,4-cyclodiphosphate (ME-2,4cPP) into 1-hydroxy-2-methyl-2-(E)-butenyl 4-diphosphate. The polypeptide is 4-hydroxy-3-methylbut-2-en-1-yl diphosphate synthase (flavodoxin) (Koribacter versatilis (strain Ellin345)).